Consider the following 317-residue polypeptide: Ribosomal protein L11 methyltransferase (317 aa).

Thr158, Gly179, Asp201, and Asn244 together coordinate S-adenosyl-L-methionine.

It belongs to the methyltransferase superfamily. PrmA family.

The protein localises to the cytoplasm. The enzyme catalyses L-lysyl-[protein] + 3 S-adenosyl-L-methionine = N(6),N(6),N(6)-trimethyl-L-lysyl-[protein] + 3 S-adenosyl-L-homocysteine + 3 H(+). Its function is as follows. Methylates ribosomal protein L11. The polypeptide is Ribosomal protein L11 methyltransferase (Streptococcus equi subsp. equi (strain 4047)).